Reading from the N-terminus, the 156-residue chain is Protein BUNDLE SHEATH DEFECTIVE 2, chloroplastic (156 aa).

The transit peptide at 1–41 (MNSAALNARTASVAPQPQACHACKCRQLLSRRVPPAQRQVE) directs the protein to the chloroplast. 8 residues coordinate Zn(2+): Cys78, Cys81, Cys89, Cys92, Cys133, Cys136, Cys144, and Cys147.

It belongs to the BSD2 chaperone family. Interacts with the RuBisCo large subunit (RbcL) assembled as an intermediate complex made of eight RbcL and eight BSD2 subunits.

It is found in the plastid. Its subcellular location is the chloroplast stroma. Its function is as follows. Chloroplast chaperone required for RuBisCo biogenesis and translational regulation of the RuBisCo large subunit (RbcL). Stabilizes an end-state assembly intermediate of eight RbcL subunits until the small subunits (RBCSs) become available to produce a complete stable RuBisCo complex containing eight small and eight large subunits. In Chlamydomonas reinhardtii (Chlamydomonas smithii), this protein is Protein BUNDLE SHEATH DEFECTIVE 2, chloroplastic.